The sequence spans 233 residues: Small ribosomal subunit protein uS3 (233 aa).

The region spanning 39-107 (VRQYLTKELA…PAQINIAEVR (69 aa)) is the KH type-2 domain.

It belongs to the universal ribosomal protein uS3 family. As to quaternary structure, part of the 30S ribosomal subunit. Forms a tight complex with proteins S10 and S14.

Its function is as follows. Binds the lower part of the 30S subunit head. Binds mRNA in the 70S ribosome, positioning it for translation. In Citrobacter koseri (strain ATCC BAA-895 / CDC 4225-83 / SGSC4696), this protein is Small ribosomal subunit protein uS3.